Here is a 138-residue protein sequence, read N- to C-terminus: Small ribosomal subunit protein bS6 (138 aa).

Residues 100-138 (SPLAKGREEDDSDSSARRARDDSDDDGDDDEDDRRASAD) are disordered. Positions 121-131 (DSDDDGDDDED) are enriched in acidic residues.

This sequence belongs to the bacterial ribosomal protein bS6 family.

Its function is as follows. Binds together with bS18 to 16S ribosomal RNA. This chain is Small ribosomal subunit protein bS6, found in Thioalkalivibrio sulfidiphilus (strain HL-EbGR7).